Here is a 247-residue protein sequence, read N- to C-terminus: Cell division protein ZapD (247 aa).

It belongs to the ZapD family. Interacts with FtsZ.

The protein localises to the cytoplasm. Cell division factor that enhances FtsZ-ring assembly. Directly interacts with FtsZ and promotes bundling of FtsZ protofilaments, with a reduction in FtsZ GTPase activity. The polypeptide is Cell division protein ZapD (Cronobacter sakazakii (strain ATCC BAA-894) (Enterobacter sakazakii)).